The sequence spans 93 residues: Small ribosomal subunit protein uS19 (93 aa).

It belongs to the universal ribosomal protein uS19 family.

Protein S19 forms a complex with S13 that binds strongly to the 16S ribosomal RNA. In Karelsulcia muelleri (strain GWSS) (Sulcia muelleri), this protein is Small ribosomal subunit protein uS19.